Here is a 446-residue protein sequence, read N- to C-terminus: Phosphoglucosamine mutase (446 aa).

Ser100 (phosphoserine intermediate) is an active-site residue. The Mg(2+) site is built by Ser100, Asp241, Asp243, and Asp245. Phosphoserine is present on Ser100.

Belongs to the phosphohexose mutase family. Mg(2+) is required as a cofactor. Post-translationally, activated by phosphorylation.

It catalyses the reaction alpha-D-glucosamine 1-phosphate = D-glucosamine 6-phosphate. In terms of biological role, catalyzes the conversion of glucosamine-6-phosphate to glucosamine-1-phosphate. The polypeptide is Phosphoglucosamine mutase (Methylorubrum extorquens (strain CM4 / NCIMB 13688) (Methylobacterium extorquens)).